A 388-amino-acid chain; its full sequence is Alanine racemase 1 (388 aa).

Lys-40 (proton acceptor; specific for D-alanine) is an active-site residue. At Lys-40 the chain carries N6-(pyridoxal phosphate)lysine. Residue Arg-138 coordinates substrate. Tyr-268 functions as the Proton acceptor; specific for L-alanine in the catalytic mechanism. Met-316 is a binding site for substrate.

It belongs to the alanine racemase family. Pyridoxal 5'-phosphate serves as cofactor.

The catalysed reaction is L-alanine = D-alanine. Its pathway is amino-acid biosynthesis; D-alanine biosynthesis; D-alanine from L-alanine: step 1/1. Functionally, catalyzes the interconversion of L-alanine and D-alanine. May also act on other amino acids. The protein is Alanine racemase 1 (alr1) of Caldanaerobacter subterraneus subsp. tengcongensis (strain DSM 15242 / JCM 11007 / NBRC 100824 / MB4) (Thermoanaerobacter tengcongensis).